The sequence spans 118 residues: Heavy metal-associated isoprenylated plant protein 47 (118 aa).

Positions 1-67 constitute an HMA domain; sequence MRIKLSVNSE…KACHVTLETL (67 aa). At C115 the chain carries Cysteine methyl ester. A lipid anchor (S-farnesyl cysteine) is attached at C115. Residues 116-118 constitute a propeptide, removed in mature form; that stretch reads LVM.

It belongs to the HIPP family.

Its function is as follows. Heavy-metal-binding protein. This is Heavy metal-associated isoprenylated plant protein 47 from Arabidopsis thaliana (Mouse-ear cress).